A 122-amino-acid chain; its full sequence is Large ribosomal subunit protein uL14c (122 aa).

This sequence belongs to the universal ribosomal protein uL14 family. Part of the 50S ribosomal subunit.

Its subcellular location is the plastid. It is found in the chloroplast. Binds to 23S rRNA. The sequence is that of Large ribosomal subunit protein uL14c from Piper cenocladum (Ant piper).